The primary structure comprises 377 residues: Chaperone protein DnaJ (377 aa).

A J domain is found at 6 to 70 (DYYKILGIDK…EKKAIYDKYG (65 aa)). The CR-type zinc finger occupies 143–225 (GRVISQKLDK…CKGAKKIKES (83 aa)). The Zn(2+) site is built by cysteine 156, cysteine 159, cysteine 173, cysteine 176, cysteine 199, cysteine 202, cysteine 213, and cysteine 216. CXXCXGXG motif repeat units lie at residues 156 to 163 (CESCNGTG), 173 to 180 (CSTCNGRG), 199 to 206 (CSTCNGLG), and 213 to 220 (CPSCKGAK).

This sequence belongs to the DnaJ family. Homodimer. Zn(2+) is required as a cofactor.

The protein localises to the cytoplasm. In terms of biological role, participates actively in the response to hyperosmotic and heat shock by preventing the aggregation of stress-denatured proteins and by disaggregating proteins, also in an autonomous, DnaK-independent fashion. Unfolded proteins bind initially to DnaJ; upon interaction with the DnaJ-bound protein, DnaK hydrolyzes its bound ATP, resulting in the formation of a stable complex. GrpE releases ADP from DnaK; ATP binding to DnaK triggers the release of the substrate protein, thus completing the reaction cycle. Several rounds of ATP-dependent interactions between DnaJ, DnaK and GrpE are required for fully efficient folding. Also involved, together with DnaK and GrpE, in the DNA replication of plasmids through activation of initiation proteins. The sequence is that of Chaperone protein DnaJ from Mycoplasmopsis pulmonis (strain UAB CTIP) (Mycoplasma pulmonis).